Reading from the N-terminus, the 99-residue chain is NADH-quinone oxidoreductase subunit K (99 aa).

A run of 3 helical transmembrane segments spans residues 3–23 (PANY…GVLV), 28–48 (IVVF…LVTF), and 59–79 (IMAF…LAII).

Belongs to the complex I subunit 4L family. NDH-1 is composed of 14 different subunits. Subunits NuoA, H, J, K, L, M, N constitute the membrane sector of the complex.

It is found in the cell membrane. The catalysed reaction is a quinone + NADH + 5 H(+)(in) = a quinol + NAD(+) + 4 H(+)(out). In terms of biological role, NDH-1 shuttles electrons from NADH, via FMN and iron-sulfur (Fe-S) centers, to quinones in the respiratory chain. The immediate electron acceptor for the enzyme in this species is believed to be a menaquinone. Couples the redox reaction to proton translocation (for every two electrons transferred, four hydrogen ions are translocated across the cytoplasmic membrane), and thus conserves the redox energy in a proton gradient. The chain is NADH-quinone oxidoreductase subunit K from Frankia casuarinae (strain DSM 45818 / CECT 9043 / HFP020203 / CcI3).